The primary structure comprises 403 residues: Aspartic protease PEP1 (403 aa).

The N-terminal stretch at 1–20 (MVQISQIGAVLAVCSTLTVA) is a signal peptide. Positions 21–67 (APTKGKARFNVPQVAVPMKAVHHPAVAYARALHKFGMKVPKAVSDAA) are cleaved as a propeptide — activation peptide. The region spanning 82–400 (YVTQVTVGQG…DTEGPRIGFA (319 aa)) is the Peptidase A1 domain. Asp98 is an active-site residue. Asn159 and Asn270 each carry an N-linked (GlcNAc...) asparagine glycan. Asp293 is a catalytic residue. Cys329 and Cys361 form a disulfide bridge.

This sequence belongs to the peptidase A1 family.

It localises to the secreted. The catalysed reaction is Hydrolysis of proteins with broad specificity. Generally favors hydrophobic residues in P1 and P1', but also accepts Lys in P1, which leads to activation of trypsinogen. Does not clot milk.. In terms of biological role, secreted aspartic endopeptidase that allows assimilation of proteinaceous substrates. Can catalyze hydrolysis of the major structural proteins of basement membrane, elastin, collagen, and laminin. Thought to play a significant role in virulence. This is Aspartic protease PEP1 (PEP1) from Arthroderma benhamiae (strain ATCC MYA-4681 / CBS 112371) (Trichophyton mentagrophytes).